The following is a 142-amino-acid chain: Hemoglobin subunit alpha (142 aa).

The Globin domain maps to 2–142; that stretch reads VLSPADKTNV…VSTVLTSKYR (141 aa). Phosphoserine is present on serine 4. Residue lysine 8 is modified to N6-succinyllysine. A Phosphothreonine modification is found at threonine 9. The residue at position 12 (lysine 12) is an N6-succinyllysine. The residue at position 17 (lysine 17) is an N6-acetyllysine; alternate. Position 17 is an N6-succinyllysine; alternate (lysine 17). Tyrosine 25 bears the Phosphotyrosine mark. Serine 36 carries the phosphoserine modification. An N6-succinyllysine modification is found at lysine 41. Serine 50 bears the Phosphoserine mark. O2 is bound at residue histidine 59. Histidine 88 contacts heme b. Position 103 is a phosphoserine (serine 103). Threonine 109 bears the Phosphothreonine mark. Phosphoserine occurs at positions 125 and 132. A phosphothreonine mark is found at threonine 135 and threonine 138. At serine 139 the chain carries Phosphoserine.

The protein belongs to the globin family. As to quaternary structure, heterotetramer of two alpha chains and two beta chains in adult hemoglobin A (HbA); two alpha chains and two delta chains in adult hemoglobin A2 (HbA2); two alpha chains and two epsilon chains in early embryonic hemoglobin Gower-2; two alpha chains and two gamma chains in fetal hemoglobin F (HbF). As to expression, red blood cells.

Its function is as follows. Involved in oxygen transport from the lung to the various peripheral tissues. Hemopressin acts as an antagonist peptide of the cannabinoid receptor CNR1. Hemopressin-binding efficiently blocks cannabinoid receptor CNR1 and subsequent signaling. The chain is Hemoglobin subunit alpha (HBA1) from Pan paniscus (Pygmy chimpanzee).